We begin with the raw amino-acid sequence, 396 residues long: Tryptophan synthase beta chain (396 aa).

An N6-(pyridoxal phosphate)lysine modification is found at Lys-86.

Belongs to the TrpB family. In terms of assembly, tetramer of two alpha and two beta chains. Requires pyridoxal 5'-phosphate as cofactor.

The enzyme catalyses (1S,2R)-1-C-(indol-3-yl)glycerol 3-phosphate + L-serine = D-glyceraldehyde 3-phosphate + L-tryptophan + H2O. The protein operates within amino-acid biosynthesis; L-tryptophan biosynthesis; L-tryptophan from chorismate: step 5/5. The beta subunit is responsible for the synthesis of L-tryptophan from indole and L-serine. The protein is Tryptophan synthase beta chain of Francisella tularensis subsp. novicida (strain U112).